Reading from the N-terminus, the 524-residue chain is Gamma-taxilin (524 aa).

The segment covering 1 to 10 has biased composition (basic and acidic residues); that stretch reads MATRLEEVTR. 2 disordered regions span residues 1-37 and 64-86; these read MATRLEEVTRGRGGGTEEASEGGRGGRRRSPPQKFEI and LQHQDPSCGGTTKKHSLEGDEGS. An omega-N-methylarginine mark is found at Arg-12 and Arg-24. A phosphoserine mark is found at Ser-79, Ser-86, and Ser-97. Residues 106-115 show a composition bias toward basic and acidic residues; the sequence is REEIPGREAR. The interval 106 to 130 is disordered; sequence REEIPGREARTGPPDGQQDSECSRN. Positions 153 to 465 form a coiled coil; sequence EEKLAALCKK…KEQVSIKAAD (313 aa). A Phosphotyrosine modification is found at Tyr-283. Positions 501-524 are disordered; sequence VCEKSAAQKPSSSGSPAQGIESVD. Position 512 is a phosphoserine (Ser-512).

Belongs to the taxilin family. In terms of assembly, binds to the C-terminal coiled coil region of syntaxin family members STX1A, STX3A and STX4A. Forms a heterodimer with ATF4 in osteoblasts.

The protein localises to the nucleus membrane. The protein resides in the cytoplasm. Its subcellular location is the cytosol. In terms of biological role, may be involved in intracellular vesicle traffic. Inhibits ATF4-mediated transcription, possibly by dimerizing with ATF4 to form inactive dimers that cannot bind DNA. May be involved in regulating bone mass density through an ATF4-dependent pathway. May be involved in cell cycle progression. In Mus musculus (Mouse), this protein is Gamma-taxilin (Txlng).